Reading from the N-terminus, the 245-residue chain is Probable ABC transporter ATP-binding protein p29 (245 aa).

Residues 7–245 (LSFEKVSIIY…KEQLYKIYDN (239 aa)) form the ABC transporter domain. 39–46 (GKSGVGKS) provides a ligand contact to ATP.

This sequence belongs to the ABC transporter superfamily.

Part of a high-affinity transport system. The chain is Probable ABC transporter ATP-binding protein p29 (p29) from Mycoplasma genitalium (strain ATCC 33530 / DSM 19775 / NCTC 10195 / G37) (Mycoplasmoides genitalium).